We begin with the raw amino-acid sequence, 274 residues long: Cytochrome b-c1 complex subunit Rieske, mitochondrial (274 aa).

At 79–103 the chain is on the mitochondrial matrix side; that stretch reads SHTDIKVPDFSDYRRSEVLDTTKSS. The chain crosses the membrane as a helical span at residues 104–140; the sequence is RESSDARKGFSYLVTATTAVGVTYAAKSIVTQFVSSM. Residues 141 to 274 are Mitochondrial intermembrane-facing; sequence SASADVLAMS…FTSDDLVIVG (134 aa). Positions 187–272 constitute a Rieske domain; sequence EAAVELSQLR…YEFTSDDLVI (86 aa). Residues cysteine 217, histidine 219, cysteine 236, histidine 239, and serine 241 each coordinate [2Fe-2S] cluster. Residues cysteine 222 and cysteine 238 are joined by a disulfide bond.

Belongs to the Rieske iron-sulfur protein family. In terms of assembly, component of the ubiquinol-cytochrome c oxidoreductase (cytochrome b-c1 complex, complex III, CIII), a multisubunit enzyme composed of 11 subunits. The complex is composed of 3 respiratory subunits cytochrome b, cytochrome c1 and Rieske protein UQCRFS1, 2 core protein subunits UQCRC1/QCR1 and UQCRC2/QCR2, and 6 low-molecular weight protein subunits UQCRH/QCR6, UQCRB/QCR7, UQCRQ/QCR8, UQCR10/QCR9, UQCR11/QCR10 and subunit 9, the cleavage product of Rieske protein UQCRFS1. The complex exists as an obligatory dimer and forms supercomplexes (SCs) in the inner mitochondrial membrane with NADH-ubiquinone oxidoreductase (complex I, CI) and cytochrome c oxidase (complex IV, CIV), resulting in different assemblies (supercomplex SCI(1)III(2)IV(1) and megacomplex MCI(2)III(2)IV(2)). Incorporation of the Rieske protein UQCRFS1 is the penultimate step in complex III assembly. Interacts with TTC19, which is involved in the clearance of UQCRFS1 fragments. Component of the ubiquinol-cytochrome c oxidoreductase (cytochrome b-c1 complex, complex III, CIII). Subunit 9 corresponds to the mitochondrial targeting sequence (MTS) of Rieske protein UQCRFS1. It is retained after processing and incorporated inside complex III, where it remains bound to the complex and localizes between the 2 core subunits UQCRC1/QCR1 and UQCRC2/QCR2. Requires [2Fe-2S] cluster as cofactor. In terms of processing, proteolytic processing is necessary for the correct insertion of UQCRFS1 in the complex III dimer. Several fragments are generated during UQCRFS1 insertion, most probably due to the endogenous matrix-processing peptidase (MPP) activity of the 2 core protein subunits UQCRC1/QCR1 and UQCRC2/QCR2, which are homologous to the 2 mitochondrial-processing peptidase (MPP) subunits beta-MPP and alpha-MPP respectively. The action of the protease is also necessary for the clearance of the UQCRFS1 fragments.

It is found in the mitochondrion inner membrane. The enzyme catalyses a quinol + 2 Fe(III)-[cytochrome c](out) = a quinone + 2 Fe(II)-[cytochrome c](out) + 2 H(+)(out). Component of the ubiquinol-cytochrome c oxidoreductase, a multisubunit transmembrane complex that is part of the mitochondrial electron transport chain which drives oxidative phosphorylation. The respiratory chain contains 3 multisubunit complexes succinate dehydrogenase (complex II, CII), ubiquinol-cytochrome c oxidoreductase (cytochrome b-c1 complex, complex III, CIII) and cytochrome c oxidase (complex IV, CIV), that cooperate to transfer electrons derived from NADH and succinate to molecular oxygen, creating an electrochemical gradient over the inner membrane that drives transmembrane transport and the ATP synthase. The cytochrome b-c1 complex catalyzes electron transfer from ubiquinol to cytochrome c, linking this redox reaction to translocation of protons across the mitochondrial inner membrane, with protons being carried across the membrane as hydrogens on the quinol. In the process called Q cycle, 2 protons are consumed from the matrix, 4 protons are released into the intermembrane space and 2 electrons are passed to cytochrome c. The Rieske protein is a catalytic core subunit containing a [2Fe-2S] iron-sulfur cluster. It cycles between 2 conformational states during catalysis to transfer electrons from the quinol bound in the Q(0) site in cytochrome b to cytochrome c1. Incorporation of UQCRFS1 is the penultimate step in complex III assembly. Functionally, component of the ubiquinol-cytochrome c oxidoreductase (cytochrome b-c1 complex, complex III, CIII). UQCRFS1 undergoes proteolytic processing once it is incorporated in the complex III dimer. One of the fragments, called subunit 9, corresponds to its mitochondrial targeting sequence (MTS). The proteolytic processing is necessary for the correct insertion of UQCRFS1 in the complex III dimer, but the persistence of UQCRFS1-derived fragments may prevent newly imported UQCRFS1 to be processed and assembled into complex III and is detrimental for the complex III structure and function. The polypeptide is Cytochrome b-c1 complex subunit Rieske, mitochondrial (UQCRFS1) (Aotus azarae (Azara's night monkey)).